The sequence spans 190 residues: ATP synthase subunit delta (190 aa).

It belongs to the ATPase delta chain family. In terms of assembly, F-type ATPases have 2 components, F(1) - the catalytic core - and F(0) - the membrane proton channel. F(1) has five subunits: alpha(3), beta(3), gamma(1), delta(1), epsilon(1). F(0) has three main subunits: a(1), b(2) and c(10-14). The alpha and beta chains form an alternating ring which encloses part of the gamma chain. F(1) is attached to F(0) by a central stalk formed by the gamma and epsilon chains, while a peripheral stalk is formed by the delta and b chains.

It localises to the cell inner membrane. Its function is as follows. F(1)F(0) ATP synthase produces ATP from ADP in the presence of a proton or sodium gradient. F-type ATPases consist of two structural domains, F(1) containing the extramembraneous catalytic core and F(0) containing the membrane proton channel, linked together by a central stalk and a peripheral stalk. During catalysis, ATP synthesis in the catalytic domain of F(1) is coupled via a rotary mechanism of the central stalk subunits to proton translocation. Functionally, this protein is part of the stalk that links CF(0) to CF(1). It either transmits conformational changes from CF(0) to CF(1) or is implicated in proton conduction. In Salinibacter ruber (strain DSM 13855 / M31), this protein is ATP synthase subunit delta.